The primary structure comprises 311 residues: 3-oxo-4,17-pregnadiene-20-carboxyl-CoA hydratase alpha subunit (311 aa).

The segment at 198 to 295 is DUF35; sequence WDGVKAHELR…VAIGMPVRAT (98 aa).

It belongs to the thioester dehydratase family. In terms of assembly, heterodimer composed of ChsH1 and ChsH2. Two heterodimers combine to form a heterotetramer. The complex interacts with Ltp2 via the DUF35 C-terminal region of ChsH2. The ChsH1-ChsH2-Ltp2 protein complex is composed of two protomers that form a heterohexameric structure through the Ltp2 dimerization interface.

The enzyme catalyses 3-oxochola-4,17-dien-22-oyl-CoA + H2O = 17-hydroxy-3-oxochol-4-en-22-oyl-CoA. It catalyses the reaction (2E)-octenoyl-CoA + H2O = 3-hydroxyoctanoyl-CoA. The catalysed reaction is (2E)-decenoyl-CoA + H2O = 3-hydroxydecanoyl-CoA. The protein operates within steroid metabolism; cholesterol degradation. Its activity is regulated as follows. In the absence of the Ltp2 aldolase, ChsH1/ChsH2 can hydrate only about 30% of the 3-OPDC-CoA substrate. Complete turnover requires the presence of Ltp2. Its function is as follows. Involved in cholesterol side chain degradation. Catalyzes the hydration of 3-oxo-4,17-pregnadiene-20-carboxyl-CoA (3-OPDC-CoA) to form 17-hydroxy-3-oxo-4-pregnene-20-carboxyl-CoA (17-HOPC-CoA), in the modified beta-oxidation pathway for cholesterol side chain degradation. Can also use octenoyl-CoA and decenoyl-CoA, with lower efficiency. This is 3-oxo-4,17-pregnadiene-20-carboxyl-CoA hydratase alpha subunit from Mycobacterium tuberculosis (strain ATCC 25618 / H37Rv).